The sequence spans 184 residues: ATP synthase subunit b (184 aa).

A helical membrane pass occupies residues 24-44 (ILVVVVGFALLMFIVIKFIVP).

Belongs to the ATPase B chain family. F-type ATPases have 2 components, F(1) - the catalytic core - and F(0) - the membrane proton channel. F(1) has five subunits: alpha(3), beta(3), gamma(1), delta(1), epsilon(1). F(0) has three main subunits: a(1), b(2) and c(10-14). The alpha and beta chains form an alternating ring which encloses part of the gamma chain. F(1) is attached to F(0) by a central stalk formed by the gamma and epsilon chains, while a peripheral stalk is formed by the delta and b chains.

It is found in the cell membrane. Its function is as follows. F(1)F(0) ATP synthase produces ATP from ADP in the presence of a proton or sodium gradient. F-type ATPases consist of two structural domains, F(1) containing the extramembraneous catalytic core and F(0) containing the membrane proton channel, linked together by a central stalk and a peripheral stalk. During catalysis, ATP synthesis in the catalytic domain of F(1) is coupled via a rotary mechanism of the central stalk subunits to proton translocation. Functionally, component of the F(0) channel, it forms part of the peripheral stalk, linking F(1) to F(0). The sequence is that of ATP synthase subunit b (atpF) from Micrococcus luteus (strain ATCC 4698 / DSM 20030 / JCM 1464 / CCM 169 / CCUG 5858 / IAM 1056 / NBRC 3333 / NCIMB 9278 / NCTC 2665 / VKM Ac-2230) (Micrococcus lysodeikticus).